The following is a 308-amino-acid chain: ADP-L-glycero-D-manno-heptose-6-epimerase (308 aa).

NADP(+)-binding positions include 10-11, 31-32, Lys-38, Lys-53, 75-79, and Asn-92; these read FI, DN, and EGACS. The Proton acceptor role is filled by Tyr-139. Lys-143 is a binding site for NADP(+). Asn-168 contacts substrate. NADP(+) contacts are provided by Val-169 and Lys-177. Lys-177 acts as the Proton acceptor in catalysis. Residues Ser-179, His-186, 200-203, Arg-208, and Tyr-271 each bind substrate; that span reads FAGS.

The protein belongs to the NAD(P)-dependent epimerase/dehydratase family. HldD subfamily. As to quaternary structure, homopentamer. Requires NADP(+) as cofactor.

The catalysed reaction is ADP-D-glycero-beta-D-manno-heptose = ADP-L-glycero-beta-D-manno-heptose. The protein operates within nucleotide-sugar biosynthesis; ADP-L-glycero-beta-D-manno-heptose biosynthesis; ADP-L-glycero-beta-D-manno-heptose from D-glycero-beta-D-manno-heptose 7-phosphate: step 4/4. Catalyzes the interconversion between ADP-D-glycero-beta-D-manno-heptose and ADP-L-glycero-beta-D-manno-heptose via an epimerization at carbon 6 of the heptose. The sequence is that of ADP-L-glycero-D-manno-heptose-6-epimerase from Haemophilus influenzae (strain PittGG).